Here is a 45-residue protein sequence, read N- to C-terminus: MSKRTFQPNNRRRAKTHGFRLRMRTRAGRAIISTRRAKGRTRLAA.

Belongs to the bacterial ribosomal protein bL34 family.

The protein is Large ribosomal subunit protein bL34 of Salinispora arenicola (strain CNS-205).